The primary structure comprises 361 residues: Myricetin 3-O-methyltransferase 3 (361 aa).

Residue aspartate 229 coordinates S-adenosyl-L-methionine. Histidine 267 serves as the catalytic Proton acceptor.

Belongs to the class I-like SAM-binding methyltransferase superfamily. Cation-independent O-methyltransferase family. In terms of assembly, homodimer. Mainly expressed in leaves secreting glandular trichomes types 1 and 4 and, to a lesser extent, in storage trichomes type 6.

The enzyme catalyses kaempferol + S-adenosyl-L-methionine = 3-O-methylkaempferol + S-adenosyl-L-homocysteine + H(+). It catalyses the reaction quercetin + S-adenosyl-L-methionine = 3',4',5,7-tetrahydroxy-3-methoxyflavone + S-adenosyl-L-homocysteine + H(+). It carries out the reaction myricetin + S-adenosyl-L-methionine = 3-O-methylmyricetin + S-adenosyl-L-homocysteine + H(+). The catalysed reaction is kaempferide + S-adenosyl-L-methionine = 3,4'-O-dimethylkaempferol + S-adenosyl-L-homocysteine + H(+). The enzyme catalyses isorhamnetin + S-adenosyl-L-methionine = 3,3'-O-dimethylquercetin + S-adenosyl-L-homocysteine + H(+). It catalyses the reaction rhamnetin + S-adenosyl-L-methionine = 3',4',5-trihydroxy-3,7-dimethoxyflavone + S-adenosyl-L-homocysteine + H(+). It carries out the reaction laricitrin + S-adenosyl-L-methionine = 3,3'-O-dimethylmyricetin + S-adenosyl-L-homocysteine + H(+). The catalysed reaction is syringetin + S-adenosyl-L-methionine = 3,3',5'-O-trimethylmyricetin + S-adenosyl-L-homocysteine + H(+). It functions in the pathway flavonoid metabolism. Flavonoid 3-O-methyltransferase involved in the biosynthesis of polymethoxylated flavonoids natural products such as myricetin derivatives, aroma compounds possessing antioxidant properties and exhibiting pharmacological activities such as anti-carcinogen, anti-viral, anti-thrombotic, anti-diabetic, anti-atherosclerotic, and anti-inflammatory effects. Catalyzes S-adenosylmethionine-dependent regioselective 3-O-methylation of flavonoids; active on various hydroxylated flavonoid substrates. Active with myricetin, quercetin, kaempferol, 4'-methyl kaempferol (kaempferide), 3'-methyl quercetin (isorhamnetin), 7-methyl quercetin (rhamnetin), 3'-methyl myricetin (laricitrin) and 3',5'-dimethyl myricetin (syringetin), thus producing 3-methyl myricetin, 3-methyl quercetin, 3-methyl kaempferol, 4',3-methyl kaempferol, 3',3-methyl quercetin, 7,3-dimethyl quercetin, 3',3-dimethyl myricetin and 3',5',3-dimethyl myricetin, respectively. Inactive with flavonol substrates methylated at the 3-hydroxyl position such as 3-O-methyl quercetin. This chain is Myricetin 3-O-methyltransferase 3, found in Solanum habrochaites (Wild tomato).